The following is a 155-amino-acid chain: Small ribosomal subunit protein uS7 (155 aa).

Belongs to the universal ribosomal protein uS7 family. In terms of assembly, part of the 30S ribosomal subunit. Contacts proteins S9 and S11.

Functionally, one of the primary rRNA binding proteins, it binds directly to 16S rRNA where it nucleates assembly of the head domain of the 30S subunit. Is located at the subunit interface close to the decoding center, probably blocks exit of the E-site tRNA. The sequence is that of Small ribosomal subunit protein uS7 from Xylella fastidiosa (strain 9a5c).